The chain runs to 452 residues: Bifunctional protein GlmU (452 aa).

The tract at residues methionine 1–lysine 224 is pyrophosphorylase. Residues leucine 6–glycine 9, lysine 20, glutamine 71, glycine 76–threonine 77, tyrosine 98–aspartate 100, glycine 135, glutamate 149, asparagine 164, and asparagine 222 contribute to the UDP-N-acetyl-alpha-D-glucosamine site. Aspartate 100 contributes to the Mg(2+) binding site. Mg(2+) is bound at residue asparagine 222. The segment at valine 225 to glutamine 245 is linker. The segment at glycine 246 to lysine 452 is N-acetyltransferase. UDP-N-acetyl-alpha-D-glucosamine contacts are provided by arginine 328 and lysine 346. The active-site Proton acceptor is the histidine 358. The UDP-N-acetyl-alpha-D-glucosamine site is built by tyrosine 361 and asparagine 372. Acetyl-CoA is bound by residues alanine 375, asparagine 381–tyrosine 382, serine 400, alanine 418, and arginine 435.

This sequence in the N-terminal section; belongs to the N-acetylglucosamine-1-phosphate uridyltransferase family. The protein in the C-terminal section; belongs to the transferase hexapeptide repeat family. As to quaternary structure, homotrimer. It depends on Mg(2+) as a cofactor.

The protein localises to the cytoplasm. The catalysed reaction is alpha-D-glucosamine 1-phosphate + acetyl-CoA = N-acetyl-alpha-D-glucosamine 1-phosphate + CoA + H(+). It carries out the reaction N-acetyl-alpha-D-glucosamine 1-phosphate + UTP + H(+) = UDP-N-acetyl-alpha-D-glucosamine + diphosphate. Its pathway is nucleotide-sugar biosynthesis; UDP-N-acetyl-alpha-D-glucosamine biosynthesis; N-acetyl-alpha-D-glucosamine 1-phosphate from alpha-D-glucosamine 6-phosphate (route II): step 2/2. It participates in nucleotide-sugar biosynthesis; UDP-N-acetyl-alpha-D-glucosamine biosynthesis; UDP-N-acetyl-alpha-D-glucosamine from N-acetyl-alpha-D-glucosamine 1-phosphate: step 1/1. The protein operates within bacterial outer membrane biogenesis; LPS lipid A biosynthesis. Functionally, catalyzes the last two sequential reactions in the de novo biosynthetic pathway for UDP-N-acetylglucosamine (UDP-GlcNAc). The C-terminal domain catalyzes the transfer of acetyl group from acetyl coenzyme A to glucosamine-1-phosphate (GlcN-1-P) to produce N-acetylglucosamine-1-phosphate (GlcNAc-1-P), which is converted into UDP-GlcNAc by the transfer of uridine 5-monophosphate (from uridine 5-triphosphate), a reaction catalyzed by the N-terminal domain. The protein is Bifunctional protein GlmU of Janthinobacterium sp. (strain Marseille) (Minibacterium massiliensis).